Consider the following 130-residue polypeptide: Cytochrome b-c1 complex subunit 7 (130 aa).

The protein belongs to the UQCRB/QCR7 family. As to quaternary structure, component of the ubiquinol-cytochrome c oxidoreductase (cytochrome b-c1 complex, complex III, CIII), a multisubunit enzyme composed of 3 respiratory subunits cytochrome b, cytochrome c1 and Rieske protein, 2 core protein subunits, and additional low-molecular weight protein subunits. The complex exists as an obligatory dimer and forms supercomplexes (SCs) in the inner mitochondrial membrane with cytochrome c oxidase (complex IV, CIV).

The protein resides in the mitochondrion inner membrane. In terms of biological role, component of the ubiquinol-cytochrome c oxidoreductase, a multisubunit transmembrane complex that is part of the mitochondrial electron transport chain which drives oxidative phosphorylation. The respiratory chain contains 3 multisubunit complexes succinate dehydrogenase (complex II, CII), ubiquinol-cytochrome c oxidoreductase (cytochrome b-c1 complex, complex III, CIII) and cytochrome c oxidase (complex IV, CIV), that cooperate to transfer electrons derived from NADH and succinate to molecular oxygen, creating an electrochemical gradient over the inner membrane that drives transmembrane transport and the ATP synthase. The cytochrome b-c1 complex catalyzes electron transfer from ubiquinol to cytochrome c, linking this redox reaction to translocation of protons across the mitochondrial inner membrane, with protons being carried across the membrane as hydrogens on the quinol. In the process called Q cycle, 2 protons are consumed from the matrix, 4 protons are released into the intermembrane space and 2 electrons are passed to cytochrome c. In Schistosoma mansoni (Blood fluke), this protein is Cytochrome b-c1 complex subunit 7.